Reading from the N-terminus, the 414-residue chain is Ribulose bisphosphate carboxylase/oxygenase activase (414 aa).

Position 37 to 44 (37 to 44) interacts with ATP; it reads GRKGEGKT. Residues 296–326 form a disordered region; sequence RGYQTAPPPEAPVIQPVNNSSHKQKTSNTHL. A compositionally biased stretch (polar residues) spans 311–326; it reads PVNNSSHKQKTSNTHL.

This sequence belongs to the RuBisCO activase family.

In terms of biological role, activation of RuBisCO (ribulose-1,5-bisohosphate carboxylase/oxygenase; EC 4.1.1.39) involves the ATP-dependent carboxylation of the epsilon-amino group of lysine leading to a carbamate structure. This chain is Ribulose bisphosphate carboxylase/oxygenase activase (rca), found in Nostoc sp. (strain PCC 7120 / SAG 25.82 / UTEX 2576).